Reading from the N-terminus, the 433-residue chain is Trigger factor (433 aa).

Positions 163 to 248 constitute a PPIase FKBP-type domain; the sequence is GDTVNIDFSG…VNEIKFKDVP (86 aa).

Belongs to the FKBP-type PPIase family. Tig subfamily.

It localises to the cytoplasm. It catalyses the reaction [protein]-peptidylproline (omega=180) = [protein]-peptidylproline (omega=0). In terms of biological role, involved in protein export. Acts as a chaperone by maintaining the newly synthesized protein in an open conformation. Functions as a peptidyl-prolyl cis-trans isomerase. This chain is Trigger factor, found in Staphylococcus epidermidis (strain ATCC 35984 / DSM 28319 / BCRC 17069 / CCUG 31568 / BM 3577 / RP62A).